Here is a 373-residue protein sequence, read N- to C-terminus: Probable ethanolamine permease EutH (373 aa).

The next 10 helical transmembrane spans lie at 5 to 25 (EIII…KIIG), 38 to 58 (IMAM…APVL), 61 to 81 (ILSP…AMFA), 111 to 131 (ILGS…LGII), 143 to 163 (VLSG…VAGF), 166 to 186 (IMIF…MLGL), 197 to 217 (FTIF…AGAI), 236 to 256 (IEIV…VFVI), 307 to 327 (VAFA…TAGV), and 331 to 351 (MIFP…AVGI).

It belongs to the EutH family.

Its subcellular location is the cell membrane. It carries out the reaction ethanolamine(in) = ethanolamine(out). Functionally, probably involved in the diffusion of protonated ethanolamine (EA) into the cell at low pH. At low pH most EA is protonated, and this permease becomes necessary. Contributes to bacterial survival and replication in acidic macrophage vacuoles, but not to bacterial uptake by macrophages. This Listeria monocytogenes serotype 1/2a (strain 10403S) protein is Probable ethanolamine permease EutH.